Consider the following 293-residue polypeptide: Large ribosomal subunit protein uL18 (293 aa).

Residues 249 to 273 (DASPAAKKAAKPSKRHTAKRLTYDE) are disordered. Residues 256–267 (KAAKPSKRHTAK) are compositionally biased toward basic residues.

This sequence belongs to the universal ribosomal protein uL18 family. In terms of assembly, component of the large ribosomal subunit (LSU).

The protein localises to the cytoplasm. Its subcellular location is the nucleus. In terms of biological role, component of the ribosome, a large ribonucleoprotein complex responsible for the synthesis of proteins in the cell. The small ribosomal subunit (SSU) binds messenger RNAs (mRNAs) and translates the encoded message by selecting cognate aminoacyl-transfer RNA (tRNA) molecules. The large subunit (LSU) contains the ribosomal catalytic site termed the peptidyl transferase center (PTC), which catalyzes the formation of peptide bonds, thereby polymerizing the amino acids delivered by tRNAs into a polypeptide chain. The nascent polypeptides leave the ribosome through a tunnel in the LSU and interact with protein factors that function in enzymatic processing, targeting, and the membrane insertion of nascent chains at the exit of the ribosomal tunnel. The chain is Large ribosomal subunit protein uL18 (rpl-5) from Caenorhabditis elegans.